Consider the following 284-residue polypeptide: Homeobox protein six1b (284 aa).

The segment at residues 124-183 is a DNA-binding region (homeobox); sequence GEETSYCFKEKSRGVLREWYTHNPYPSPREKRELAEATGLTTTQVSNWFKNRRQRDRAAE. The tract at residues 167–238 is disordered; the sequence is QVSNWFKNRR…NSVLLLQGNM (72 aa). Residues 179–190 show a composition bias toward basic and acidic residues; the sequence is DRAAEAKERENS. Polar residues-rich tracts occupy residues 191–204 and 226–238; these read ENNNTGANKQNQLS and PDQNSVLLLQGNM.

The protein belongs to the SIX/Sine oculis homeobox family. As to quaternary structure, interacts with eya1.

Its subcellular location is the nucleus. It localises to the cytoplasm. In terms of biological role, transcription factor that is involved in the regulation of cell proliferation, apoptosis and embryonic development. Depending on context, functions as a transcriptional repressor or activator. Transcriptional activation is enhanced by eya1 (in vitro). Plays an important role in the development of the inner ear, where it promotes hair cell proliferation and inhibits proliferation of neural progenitor cells. Required for normal myogenesis. Plays a role in the development of fast muscle fibers throughout the body, as well as the development of craniofacial muscles. Required for normal expression of myod1 and myog during myogenesis. This is Homeobox protein six1b (six1b) from Danio rerio (Zebrafish).